A 772-amino-acid chain; its full sequence is Carnitine O-palmitoyltransferase 1, muscle isoform (772 aa).

Residues 1 to 47 lie on the Cytoplasmic side of the membrane; sequence MAEAHQAVAFQFTVTPDGVDFRLSREALKHVYLSGINSWKKRLIRIK. The chain crosses the membrane as a helical span at residues 48-73; the sequence is NGILRGVYPGSPTSWLVVIMATVGSS. Residues 74-102 are Mitochondrial intermembrane-facing; it reads FCNVDISLGLVSCIQRCLPQGCGPYQTPQ. A helical transmembrane segment spans residues 103-122; that stretch reads TRALLSMAIFSTGVWVTGIF. Residues 123 to 772 are Cytoplasmic-facing; the sequence is FFRQTLKLLL…DLFQVPKAYS (650 aa). The active-site Proton acceptor is histidine 473. 555–567 lines the CoA pocket; sequence GKGLIKKCRTSPD. 2 residues coordinate (R)-carnitine: tyrosine 589 and threonine 602.

The protein belongs to the carnitine/choline acetyltransferase family. As to expression, strong expression in heart and skeletal muscle. No expression in liver and kidney.

Its subcellular location is the mitochondrion outer membrane. It carries out the reaction (R)-carnitine + hexadecanoyl-CoA = O-hexadecanoyl-(R)-carnitine + CoA. It functions in the pathway lipid metabolism; fatty acid beta-oxidation. Its function is as follows. Catalyzes the transfer of the acyl group of long-chain fatty acid-CoA conjugates onto carnitine, an essential step for the mitochondrial uptake of long-chain fatty acids and their subsequent beta-oxidation in the mitochondrion. The chain is Carnitine O-palmitoyltransferase 1, muscle isoform (CPT1B) from Homo sapiens (Human).